A 150-amino-acid chain; its full sequence is Globin-2 A chain (150 aa).

A Blocked amino end (Val) modification is found at Val-2. Residues 10–150 (CGSEAIKANL…ALVGVVQAAL (141 aa)) enclose the Globin domain. His-102 serves as a coordination point for heme b.

The protein belongs to the globin family. In terms of assembly, heterotetramer of two alpha chains and two beta chains.

This Anadara inaequivalvis (Inequivalve ark) protein is Globin-2 A chain.